The chain runs to 336 residues: Transmembrane protein 120A (336 aa).

Topologically, residues 1–131 are cytoplasmic; that stretch reads MNSPALQDCV…KQSKFAYKDE (131 aa). Position 129 (K129) interacts with CoA. Residues 132–151 traverse the membrane as a helical segment; the sequence is YEKFKLYLTMILMVLSFICR. Residues 152-157 are Extracellular-facing; it reads FVLNSR. Residues 158–176 traverse the membrane as a helical segment; the sequence is VTDAVFNFLLVWYYCTLTI. Over 177 to 189 the chain is Cytoplasmic; the sequence is RESILINNGSRIK. S186 and R187 together coordinate CoA. Residues 190–208 form a helical membrane-spanning segment; it reads GWWVLNHYISTFLSGVMLT. Residues 209-217 lie on the Extracellular side of the membrane; sequence WPDGLMYQM. The helical transmembrane segment at 218 to 239 threads the bilayer; the sequence is FRNQFLSFSMYQSFVQFLQYYY. CoA-binding residues include Q236, Y239, and Q240. Residues 240–269 are Cytoplasmic-facing; the sequence is QSGCLYRLRALGERHNMDLTVEGFQSWMWR. A helical membrane pass occupies residues 270-293; the sequence is GLTFLLPFLFFGQFWQLYNAITLF. Topologically, residues 294-303 are extracellular; that stretch reads KLARHPECKE. The chain crosses the membrane as a helical span at residues 304–329; that stretch reads WQVIMCGLPFLVHFLGNFFTTLRVVH. Residues 330–336 are Cytoplasmic-facing; the sequence is QKFQKQN. Position 331 (K331) interacts with CoA.

It belongs to the TMEM120 family. In terms of assembly, homodimer.

It is found in the cell membrane. It localises to the nucleus inner membrane. The protein resides in the endoplasmic reticulum. Multifunctional protein involved in mechanosensation, and plays an essential role in lipid metabolism. May function as a potential ion channel involved in sensing mechanical stimuli. TMEM120A is structurally similar to a lipid-modifying enzyme, ELOVL7, and contains a bound coenzyme A molecule, which suggests it might function as an enzyme in lipid metabolism. The protein is Transmembrane protein 120A of Xenopus tropicalis (Western clawed frog).